The primary structure comprises 747 residues: Anoctamin-9 (747 aa).

The Cytoplasmic segment spans residues 1 to 193 (MQDDESSQIF…LYFTWLGWYT (193 aa)). Residues 194–214 (YMLVPAAVVGLIVFLSGFALF) traverse the membrane as a helical segment. Residues 215–259 (DSSQISKEICSANDIFMCPLGDHSHRYLRLSEMCTFAKLTHLFDN) lie on the Extracellular side of the membrane. Phosphoserine; by PKA is present on S245. The helical transmembrane segment at 260–280 (EGTVLFAIFMALWATVFLEIW) threads the bilayer. Residues 281 to 326 (KRKRAHEVQSWKLYEWDEEEEEMALELINSPHYKLKDHRHSYLSST) lie on the Cytoplasmic side of the membrane. The helical transmembrane segment at 327–347 (IILILSLFMICLMIGMAHVLV) threads the bilayer. Residues 348 to 364 (VYRVLAGALFSSLVKQQ) lie on the Extracellular side of the membrane. A helical membrane pass occupies residues 365-385 (VTTAVVVTGAVVHYIIIVIMT). The Cytoplasmic segment spans residues 386–414 (KVNKYVALKLCKFEESGTFSEQERKFTVK). The chain crosses the membrane as a helical span at residues 415–435 (FFILQFFAHFSSLIYIAFILG). Residues 436–543 (RINGHPGKST…EMMIQYGFTT (108 aa)) are Extracellular-facing. Residues 544 to 564 (IFVAAFPLAPLLALFSNLVEI) traverse the membrane as a helical segment. Over 565–595 (RLDAIKMVRLQRRLVPRKAKDIGTWLQVLET) the chain is Cytoplasmic. The chain crosses the membrane as a helical span at residues 596-616 (IGVLAVIANGMVIAFTSEFIP). At 617 to 695 (RVVYKYHYGP…FWFILAIRLT (79 aa)) the chain is on the extracellular side. N630, N643, N665, and N681 each carry an N-linked (GlcNAc...) asparagine glycan. Residues 696-716 (FVILFEHFALCIKLIAAWFVP) form a helical membrane-spanning segment. The Cytoplasmic segment spans residues 717–747 (DVPQKVKNEVLQEKYDRIRHRMRFSSRSTDV).

The protein belongs to the anoctamin family. In terms of processing, phosphorylation on Ser-245 by cAMP-dependent protein kinase A (PKA)is essential for activation of its cation channel activity. As to expression, highly expressed in the olfactory epithelium, particularly in mature olfactory sensory neurons (at protein level). Expressed in the kidney (at protein level). Predominant expression seen in epithelial tissues. Highly expressed in the small intestine, colon and stomach.

The protein localises to the cell membrane. It is found in the endoplasmic reticulum. The catalysed reaction is a 1,2-diacyl-sn-glycero-3-phospho-L-serine(in) = a 1,2-diacyl-sn-glycero-3-phospho-L-serine(out). The enzyme catalyses a beta-D-galactosyl-(1&lt;-&gt;1')-N-acylsphing-4-enine(out) = a beta-D-galactosyl-(1&lt;-&gt;1')-N-acylsphing-4-enine(in). It catalyses the reaction a 1,2-diacyl-sn-glycero-3-phosphocholine(in) = a 1,2-diacyl-sn-glycero-3-phosphocholine(out). It carries out the reaction Ca(2+)(in) = Ca(2+)(out). The catalysed reaction is Na(+)(in) = Na(+)(out). The enzyme catalyses K(+)(in) = K(+)(out). Cation channel activity is activated via phosphorylation on Ser-245 by cAMP-dependent protein kinase A (PKA). Inhibited by NaCl. Its function is as follows. PKA-activated nonselective cation channel. Discriminates poorly among cations but is more permeable to Ca(2+) ions than to monovalent cations. Acts as a calcium-activated calcium permeable channel which may operate as a endoplasmic reticulum (ER) Ca(2+)-leak channel, reducing the loading of the ER Ca(2+) store. Regulates intracellular Ca2+ signals, ion channel activity, and cytokine release in the renal tissue. Plays an important role in olfaction, amplifying cAMP-evoked cyclic nucleotide-gated (CNG) channel currents in the olfactory sensory neurons. Has calcium-dependent phospholipid scramblase activity; scrambles phosphatidylserine, phosphatidylcholine and galactosylceramide. Does not exhibit calcium-activated chloride channel (CaCC) activity. Can inhibit the activity of ANO1. The polypeptide is Anoctamin-9 (Mus musculus (Mouse)).